A 445-amino-acid polypeptide reads, in one-letter code: MASTHQSSTEPSSTGKSEETKKDASQGSGQDSKNVTVTKGTGSSATSAAIVKTGGSQGKDSSTTAGSSSTQGQKFSTTPTDPKTFSSDQKEKSKSPAKEVPSGGDSKSQGDTKSQSDAKSSGQSQGQSKDSGKSSSDSSKSHSVIGAVKDVVAGAKDVAGKAVEDAPSIMHTAVDAVKNAATTVKDVASSAASTVAEKVVDAYHSVVGDKTDDKKEGEHSGDKKDDSKAGSGSGQGGDNKKSEGETSGQAESSSGNEGAAPAKGRGRGRPPAAAKGVAKGAAKGAAASKGAKSGAESSKGGEQSSGDIEMADASSKGGSDQRDSAATVGEGGASGSEGGAKKGRGRGAGKKADAGDTSAEPPRRSSRLTSSGTGAGSAPAAAKGGAKRAASSSSTPSNAKKQATGGAGKAAATKATAAKSAASKAPQNGAGAKKKGGKAGGRKRK.

Composition is skewed to polar residues over residues 1–15 (MASTHQSSTEPSSTG) and 25–47 (SQGSGQDSKNVTVTKGTGSSATS). Disordered regions lie at residues 1 to 145 (MAST…HSVI) and 203 to 445 (YHSV…RKRK). Over residues 61 to 73 (SSTTAGSSSTQGQ) the composition is skewed to low complexity. The segment covering 74–87 (KFSTTPTDPKTFSS) has biased composition (polar residues). The segment covering 88–97 (DQKEKSKSPA) has biased composition (basic and acidic residues). Low complexity predominate over residues 117–138 (DAKSSGQSQGQSKDSGKSSSDS). The span at 207 to 228 (VGDKTDDKKEGEHSGDKKDDSK) shows a compositional bias: basic and acidic residues. The interval 208-445 (GDKTDDKKEG…GGKAGGRKRK (238 aa)) is required and sufficient for DNA-binding and co-localization with nuclear DNA. Positions 245–256 (ETSGQAESSSGN) are enriched in polar residues. Residues 257–306 (EGAAPAKGRGRGRPPAAAKGVAKGAAKGAAASKGAKSGAESSKGGEQSSG) show a composition bias toward low complexity. Residues 329–338 (GEGGASGSEG) show a composition bias toward gly residues. The required for nucleosome binding and for the protection of chromatin from hydroxyl radical-mediated DNA damage stretch occupies residues 360–445 (EPPRRSSRLT…GGKAGGRKRK (86 aa)). Positions 367–431 (RLTSSGTGAG…ASKAPQNGAG (65 aa)) are enriched in low complexity. The span at 432–445 (AKKKGGKAGGRKRK) shows a compositional bias: basic residues.

It localises to the nucleus. Functionally, unique chromatin-associating protein that contributes to the organism's exceptional tolerance to harsh environmental stresses. Binds with a higher affinity to nucleosomes than to free DNA. Protects chromatin from damage caused by hydroxyl radical-mediated cleavage induced by X-rays or treatment with hydrogen peroxide. Suppresses X-ray-induced DNA damage that includes single-strand breaks (SSBs) as well as more hazardous double-strand breaks (DSBs), and improves radiotolerance. Also shields DNA against reactive oxygen species (ROS). The chain is Damage suppressor protein from Ramazzottius varieornatus (Water bear).